Reading from the N-terminus, the 315-residue chain is Porphobilinogen deaminase (315 aa).

Position 245 is an S-(dipyrrolylmethanemethyl)cysteine (C245).

It belongs to the HMBS family. Monomer. It depends on dipyrromethane as a cofactor.

It catalyses the reaction 4 porphobilinogen + H2O = hydroxymethylbilane + 4 NH4(+). It functions in the pathway porphyrin-containing compound metabolism; protoporphyrin-IX biosynthesis; coproporphyrinogen-III from 5-aminolevulinate: step 2/4. The protein operates within porphyrin-containing compound metabolism; chlorophyll biosynthesis. Functionally, tetrapolymerization of the monopyrrole PBG into the hydroxymethylbilane pre-uroporphyrinogen in several discrete steps. The polypeptide is Porphobilinogen deaminase (Prochlorococcus marinus (strain NATL1A)).